Here is a 38-residue protein sequence, read N- to C-terminus: Photosystem II reaction center protein M (38 aa).

Residues isoleucine 5–leucine 25 traverse the membrane as a helical segment.

The protein belongs to the PsbM family. As to quaternary structure, PSII is composed of 1 copy each of membrane proteins PsbA, PsbB, PsbC, PsbD, PsbE, PsbF, PsbH, PsbI, PsbJ, PsbK, PsbL, PsbM, PsbT, PsbX, PsbY, PsbZ, Psb30/Ycf12, at least 3 peripheral proteins of the oxygen-evolving complex and a large number of cofactors. It forms dimeric complexes.

It is found in the plastid. The protein resides in the cyanelle thylakoid membrane. One of the components of the core complex of photosystem II (PSII). PSII is a light-driven water:plastoquinone oxidoreductase that uses light energy to abstract electrons from H(2)O, generating O(2) and a proton gradient subsequently used for ATP formation. It consists of a core antenna complex that captures photons, and an electron transfer chain that converts photonic excitation into a charge separation. This subunit is found at the monomer-monomer interface. The sequence is that of Photosystem II reaction center protein M from Cyanophora paradoxa.